Consider the following 472-residue polypeptide: Sodium-coupled neutral amino acid transporter 5 (472 aa).

M1 carries the N-acetylmethionine modification. At 1–48 (MELQDPKMNGALPSDAVGYRQEREGFLPSRGPAPGSKPVQFMDFEGKT) the chain is on the cytoplasmic side. Residues 49–71 (SFGMSVFNLSNAIMGSGILGLAY) form a helical membrane-spanning segment. The Extracellular segment spans residues 72–87 (AMAHTGVIFFLALLLC). The chain crosses the membrane as a helical span at residues 88–108 (IALLSSYSIHLLLTCAGIAGI). Topologically, residues 109–125 (RAYEQLGQRAFGPAGKV) are cytoplasmic. A helical transmembrane segment spans residues 126 to 146 (VVATVICLHNVGAMSSYLFII). At 147–166 (KSELPLVIGTFLYMDPEGDW) the chain is on the extracellular side. Residues 167–187 (FLKGNLLIIIVSVLIILPLAL) traverse the membrane as a helical segment. Over 188-192 (MKHLG) the chain is Cytoplasmic. A helical membrane pass occupies residues 193-213 (YLGYTSGLSLTCMLFFLVSVI). Over 214–257 (YKKFQLGCAIGHNETAMESEALVGLPSQGLNSSCEAQMFTVDSQ) the chain is Extracellular. A disulfide bridge connects residues C221 and C247. An N-linked (GlcNAc...) asparagine glycan is attached at N226. A helical membrane pass occupies residues 258–278 (MSYTVPIMAFAFVCHPEVLPI). Topologically, residues 279–295 (YTELCRPSKRRMQAVAN) are cytoplasmic. Residues 296-316 (VSIGAMFCMYGLTATFGYLTF) traverse the membrane as a helical segment. Residues 317–334 (YSSVKAEMLHMYSQKDPL) lie on the Extracellular side of the membrane. The helical transmembrane segment at 335–355 (ILCVRLAVLLAVTLTVPVVLF) threads the bilayer. The Cytoplasmic segment spans residues 356–376 (PIRRALQQLLFPGKAFSWPRH). The chain crosses the membrane as a helical span at residues 377–397 (VAIALILLVLVNVLVICVPTI). Residues 398-399 (RD) are Extracellular-facing. Residues 400 to 420 (IFGVIGSTSAPSLIFILPSIF) traverse the membrane as a helical segment. Topologically, residues 421–439 (YLRIVPSEVEPFLSWPKIQ) are cytoplasmic. The chain crosses the membrane as a helical span at residues 440–460 (ALCFGVLGVLFMAVSLGFMFA). Topologically, residues 461-472 (NWATGQSRMSGH) are extracellular.

The protein belongs to the amino acid/polyamine transporter 2 family. As to expression, predominantly expressed in stomach, brain, liver, lung and intestinal tract.

The protein localises to the cell membrane. It carries out the reaction L-serine(out) + Na(+)(out) + H(+)(in) = L-serine(in) + Na(+)(in) + H(+)(out). The catalysed reaction is L-alanine(out) + Na(+)(out) + H(+)(in) = L-alanine(in) + Na(+)(in) + H(+)(out). It catalyses the reaction glycine(out) + Na(+)(out) + H(+)(in) = glycine(in) + Na(+)(in) + H(+)(out). The enzyme catalyses L-glutamine(out) + Na(+)(out) + H(+)(in) = L-glutamine(in) + Na(+)(in) + H(+)(out). It carries out the reaction L-asparagine(out) + Na(+)(out) + H(+)(in) = L-asparagine(in) + Na(+)(in) + H(+)(out). The catalysed reaction is L-histidine(out) + Na(+)(out) + H(+)(in) = L-histidine(in) + Na(+)(in) + H(+)(out). It catalyses the reaction L-cysteine(out) + Na(+)(out) + H(+)(in) = L-cysteine(in) + Na(+)(in) + H(+)(out). Not inhibited by lithium. Partial allosteric regulation on ions sodium binding. Its function is as follows. Symporter that cotransports neutral amino acids and sodium ions, coupled to an H(+) antiporter activity. Releases L-glutamine and glycine from astroglial cells and may participate in the glutamate/GABA-L-glutamine cycle and the NMDA receptors activation. In addition, contributes significantly to L-glutamine uptake in retina, namely in ganglion and Mueller cells therefore, participates in the retinal glutamate-glutamine cycle. The transport activity is pH sensitive and Li(+) tolerant. Moreover functions in both direction and is associated with large uncoupled fluxes of protons. The transport is electroneutral coupled to the cotransport of 1 Na(+) and the antiport of 1 H(+). May have a particular importance for modulation of net hepatic glutamine flux. The protein is Sodium-coupled neutral amino acid transporter 5 (SLC38A5) of Homo sapiens (Human).